The chain runs to 342 residues: N-acetyl-gamma-glutamyl-phosphate reductase (342 aa).

Residue cysteine 149 is part of the active site.

It belongs to the NAGSA dehydrogenase family. Type 1 subfamily.

Its subcellular location is the cytoplasm. The enzyme catalyses N-acetyl-L-glutamate 5-semialdehyde + phosphate + NADP(+) = N-acetyl-L-glutamyl 5-phosphate + NADPH + H(+). Its pathway is amino-acid biosynthesis; L-arginine biosynthesis; N(2)-acetyl-L-ornithine from L-glutamate: step 3/4. Catalyzes the NADPH-dependent reduction of N-acetyl-5-glutamyl phosphate to yield N-acetyl-L-glutamate 5-semialdehyde. This chain is N-acetyl-gamma-glutamyl-phosphate reductase, found in Cereibacter sphaeroides (strain KD131 / KCTC 12085) (Rhodobacter sphaeroides).